Here is a 193-residue protein sequence, read N- to C-terminus: Rho-related GTP-binding protein RhoA-D (193 aa).

GTP-binding positions include 12 to 19, 30 to 37, 59 to 63, 117 to 120, and 160 to 162; these read GDGACGKT, FPEVYVPT, DTAGQ, NKKD, and SAK. Residue Tyr34 is glycosylated ((Microbial infection) O-linked (GlcNAc) tyrosine; by Yersinia Afp18). At Cys190 the chain carries Cysteine methyl ester. Cys190 carries the S-geranylgeranyl cysteine lipid modification. A propeptide spans 191 to 193 (removed in mature form); it reads LLL.

This sequence belongs to the small GTPase superfamily. Rho family. (Microbial infection) Glycosylated at Tyr-34 by Yersinia ruckeri toxin Afp18. Mono-O-GlcNAcylation by Afp18 inhibits RhoA activation by guanine nucleotide exchange factors and blocks RhoA signaling.

The protein resides in the cell membrane. In terms of biological role, regulates a signal transduction pathway linking plasma membrane receptors to the assembly of focal adhesions and actin stress fibers. In Danio rerio (Zebrafish), this protein is Rho-related GTP-binding protein RhoA-D.